A 487-amino-acid chain; its full sequence is MARPLSFHEDRLFPSDPATRSYARGLYALVKDLPIISPHGHTDPSWFATNAPFQDATDLLLAPDHYLFRMLYSQGVSLDALKVRSKAGVPDTDPREAWRVFASHFYLFRGTPSWVWLNHVFSQVFGFTEFLEASNADDYFDRITAALATDAFRPRALFDRFNIETLATTEGPHESLQHHAAIRESGWGGHVITAYRPDAVIDFEDERSPRAFERFAETSGQDVYSWKSYLEAHRLRRQAFIDAGATSSDHGHPTAATADLSDVEAEALFNSLVKGDVTPEKAELFRAQMLTEMAKMSLDDGLVMQIHPGSHRNHNVGLLNSHGRDKGADIPMRTEYVDALKPLLTRLGNDPRLSIILFTLDETTYSRELAPLAGHYPVLKLGPSWWFHDSPEGMMRFREQVTETAGFYNTVGFNDDTRAFLSIPARHDVARRVDSAFLARMVAEHRMDLVEAEELIVDLTYNLPKKAYKLDQRPDWARPATLRAAAE.

Belongs to the metallo-dependent hydrolases superfamily. Uronate isomerase family.

The catalysed reaction is D-glucuronate = D-fructuronate. It catalyses the reaction aldehydo-D-galacturonate = keto-D-tagaturonate. It participates in carbohydrate metabolism; pentose and glucuronate interconversion. In Caulobacter vibrioides (strain ATCC 19089 / CIP 103742 / CB 15) (Caulobacter crescentus), this protein is Uronate isomerase.